A 700-amino-acid polypeptide reads, in one-letter code: Kin of IRRE-like protein 2 (700 aa).

Positions Met-1–Ser-19 are cleaved as a signal peptide. Residues Ser-20 to Arg-507 are Extracellular-facing. 5 consecutive Ig-like C2-type domains span residues Pro-21 to His-115, Pro-120 to Ser-219, Pro-224 to Glu-304, Pro-309 to Thr-391, and Pro-395 to Leu-497. A disulfide bridge connects residues Cys-42 and Cys-100. Residue Asn-140 is glycosylated (N-linked (GlcNAc...) asparagine). 2 cysteine pairs are disulfide-bonded: Cys-143–Cys-201 and Cys-245–Cys-288. The short motif at Arg-146–Asp-148 is the Cell attachment site element. N-linked (GlcNAc...) asparagine glycosylation occurs at Asn-298. 2 disulfides stabilise this stretch: Cys-330-Cys-372 and Cys-416-Cys-482. Asn-481 is a glycosylation site (N-linked (GlcNAc...) asparagine). Residues Ile-508–Leu-528 traverse the membrane as a helical segment. At Cys-529–Val-700 the chain is on the cytoplasmic side. A disordered region spans residues Leu-542–Ser-576. A Phosphoserine modification is found at Ser-563. The segment covering Ser-564–Ser-576 has biased composition (basic and acidic residues). Phosphotyrosine occurs at positions 595, 596, and 653. The disordered stretch occupies residues Phe-671–Val-700. The span at Ser-689 to Val-700 shows a compositional bias: polar residues.

It belongs to the immunoglobulin superfamily. As to quaternary structure, homodimer. Interacts with NPHS2/podocin (via the C-terminus). Interacts with NPHS1 (via the Ig-like domains). Interacts with FYN. Post-translationally, N-glycosylated. In terms of processing, phosphorylated at Ser-548 or Ser-549; due to site ambiguity, the exact position of the serine phosphorylation could not be determined. Phosphorylation at residues Tyr-631 and/or Tyr-632. FYN mediates tyrosine phosphorylation in pancreatic beta-cells. The extracellular domain is cleaved leading to the generation of a soluble fragment and a membrane-bound C-terminal fragment, which is further cleaved by gamma-secretase. In terms of tissue distribution, highly expressed in beta-cells of the pancreatic islets. Expression is seen in podocytes of kidney glomeruli, and in the cerebellum and hindbrain at 12.5 dpc, in the spinal cord at 10.5 dpc, and in retina and hypothalamus at 13.5 dpc.

It is found in the cell membrane. In terms of biological role, may regulate basal insulin secretion. The polypeptide is Kin of IRRE-like protein 2 (Kirrel2) (Mus musculus (Mouse)).